The primary structure comprises 372 residues: Oxoglutarate-dependent flavonoid 7-O-demethylase 1 (372 aa).

Residues 221–321 (GIQALRMNYY…RLSVAAFLNP (101 aa)) form the Fe2OG dioxygenase domain. 3 residues coordinate Fe cation: His-245, Asp-247, and His-302. Position 312 (Arg-312) interacts with 2-oxoglutarate.

The protein belongs to the iron/ascorbate-dependent oxidoreductase family. In terms of assembly, monomer. Fe(2+) serves as cofactor. The cofactor is L-ascorbate. As to expression, accumulates in the trichomes of nevadensin-accumulating strains (e.g. cv. SD and cv. EMX-1) and in cv. SW (at protein level) but not in cv. MC.

The protein resides in the cytoplasm. The catalysed reaction is gardenin B + 2-oxoglutarate + O2 = nevadensin + formaldehyde + succinate + CO2 + H(+). The enzyme catalyses 8-hydroxysalvigenin + 2-oxoglutarate + O2 = pilosin + formaldehyde + succinate + CO2. Its pathway is flavonoid metabolism. With respect to regulation, inhibited by prohexadione-calcium, a 2-oxoglutarate-dependent dioxygenase (2-ODD) inhibitor, thus leading to a decreased abundance of nevadensin (NEV) and absence of pilosin (PIL) production, but to the accumulation of gardenin B (GARD B) and 8-hydroxysalvigenin (8-OH-SALV). Functionally, oxoglutarate-dependent dioxygenase (2-ODD) acting as a flavonoid 7-O-demethylase involved in the biosynthesis of polymethoxylated flavonoids natural products such as nevadensin and salvigenin, aroma compounds which contribute to the flavor of sweet basil, and exhibit pharmacological activities such as anti-allergic, anti-oxidant, antibacterial, anti-proliferative, and anti-inflammatory effects. Catalyzes the 7-O-demethylation of methoxylated flavones; mediates the conversion of 8-hydroxysalvigenin (8-OH-SALV) to pilosin (PIL) and of gardenin B (GARD B) to nevadensin (NEV). This chain is Oxoglutarate-dependent flavonoid 7-O-demethylase 1, found in Ocimum basilicum (Sweet basil).